Here is a 550-residue protein sequence, read N- to C-terminus: Arginine--tRNA ligase (550 aa).

Positions 125-135 (ANPTGPLHIGH) match the 'HIGH' region motif.

It belongs to the class-I aminoacyl-tRNA synthetase family. As to quaternary structure, monomer.

It localises to the cytoplasm. It carries out the reaction tRNA(Arg) + L-arginine + ATP = L-arginyl-tRNA(Arg) + AMP + diphosphate. This is Arginine--tRNA ligase from Lawsonia intracellularis (strain PHE/MN1-00).